The primary structure comprises 104 residues: Large ribosomal subunit protein bL28 (104 aa).

This sequence belongs to the bacterial ribosomal protein bL28 family.

This Wolbachia sp. subsp. Brugia malayi (strain TRS) protein is Large ribosomal subunit protein bL28.